Here is a 210-residue protein sequence, read N- to C-terminus: Large ribosomal subunit protein uL4 (210 aa).

Positions 46–89 are disordered; the sequence is QGTASTLTRSEVRGGGRKPYKQKGTGRARQGSIRTPLRPGGGII. Basic residues predominate over residues 60 to 71; sequence GGRKPYKQKGTG.

Belongs to the universal ribosomal protein uL4 family. In terms of assembly, part of the 50S ribosomal subunit.

Its function is as follows. One of the primary rRNA binding proteins, this protein initially binds near the 5'-end of the 23S rRNA. It is important during the early stages of 50S assembly. It makes multiple contacts with different domains of the 23S rRNA in the assembled 50S subunit and ribosome. Functionally, forms part of the polypeptide exit tunnel. The sequence is that of Large ribosomal subunit protein uL4 from Prochlorococcus marinus (strain MIT 9215).